The primary structure comprises 142 residues: Large ribosomal subunit protein uL13 (142 aa).

This sequence belongs to the universal ribosomal protein uL13 family. As to quaternary structure, part of the 50S ribosomal subunit.

This protein is one of the early assembly proteins of the 50S ribosomal subunit, although it is not seen to bind rRNA by itself. It is important during the early stages of 50S assembly. The polypeptide is Large ribosomal subunit protein uL13 (Methylococcus capsulatus (strain ATCC 33009 / NCIMB 11132 / Bath)).